Here is a 310-residue protein sequence, read N- to C-terminus: Cytochrome f (310 aa).

A signal peptide spans 1–27 (MRRILTFFLGSIIIGLSIIISPSSSFA). Positions 28, 48, 51, and 52 each coordinate heme. A helical transmembrane segment spans residues 277 to 297 (VIGLIAFFAGVALTQILLVLK).

The protein belongs to the cytochrome f family. The 4 large subunits of the cytochrome b6-f complex are cytochrome b6, subunit IV (17 kDa polypeptide, PetD), cytochrome f and the Rieske protein, while the 4 small subunits are PetG, PetL, PetM and PetN. The complex functions as a dimer. The cofactor is heme.

The protein localises to the cellular thylakoid membrane. In terms of biological role, component of the cytochrome b6-f complex, which mediates electron transfer between photosystem II (PSII) and photosystem I (PSI), cyclic electron flow around PSI, and state transitions. The polypeptide is Cytochrome f (Prochlorococcus marinus (strain SARG / CCMP1375 / SS120)).